The primary structure comprises 640 residues: 1-deoxy-D-xylulose-5-phosphate synthase (640 aa).

Thiamine diphosphate-binding positions include His-79 and 120–122 (AHS). Asp-151 serves as a coordination point for Mg(2+). Residues 152 to 153 (GA), Asn-180, Tyr-289, and Glu-371 each bind thiamine diphosphate. Position 180 (Asn-180) interacts with Mg(2+).

It belongs to the transketolase family. DXPS subfamily. As to quaternary structure, homodimer. The cofactor is Mg(2+). It depends on thiamine diphosphate as a cofactor.

It carries out the reaction D-glyceraldehyde 3-phosphate + pyruvate + H(+) = 1-deoxy-D-xylulose 5-phosphate + CO2. It participates in metabolic intermediate biosynthesis; 1-deoxy-D-xylulose 5-phosphate biosynthesis; 1-deoxy-D-xylulose 5-phosphate from D-glyceraldehyde 3-phosphate and pyruvate: step 1/1. Functionally, catalyzes the acyloin condensation reaction between C atoms 2 and 3 of pyruvate and glyceraldehyde 3-phosphate to yield 1-deoxy-D-xylulose-5-phosphate (DXP). This Erythrobacter litoralis (strain HTCC2594) protein is 1-deoxy-D-xylulose-5-phosphate synthase.